The chain runs to 335 residues: Dolichyl-diphosphooligosaccharide--protein glycosyltransferase subunit MAGT1 (335 aa).

Positions 1 to 29 are cleaved as a signal peptide; sequence MAARWRFWCVSVTMVVALLIVCDVPSASA. Residues 30-184 lie on the Extracellular side of the membrane; it reads QRKKEMVLSE…DVNIRVIRPP (155 aa). Residues 47 to 175 enclose the Thioredoxin domain; sequence WTNKRPVIRM…IARWIADRTD (129 aa). N71 carries an N-linked (GlcNAc...) asparagine glycan. C87 and C90 are disulfide-bonded. A helical transmembrane segment spans residues 185-205; sequence NYAGPLMLGLLLAVIGGLVYL. Residues 206 to 209 are Cytoplasmic-facing; the sequence is RRSN. A helical transmembrane segment spans residues 210–230; it reads MEFLFNKTGWAFAALCFVLAM. Over 231–270 the chain is Extracellular; sequence TSGQMWNHIRGPPYAHKNPHTGHVNYIHGSSQAQFVAETH. The helical transmembrane segment at 271–291 threads the bilayer; sequence IVLLFNGGVTLGMVLLCEAAT. Residues 292–300 lie on the Cytoplasmic side of the membrane; it reads SDMDIGKRK. Residues 301 to 321 traverse the membrane as a helical segment; it reads IMCVAGIGLVVLFFSWMLSIF. Residues 322–335 are Extracellular-facing; it reads RSKYHGYPYSFLMS.

The protein belongs to the OST3/OST6 family. As to quaternary structure, accessory component of the STT3B-containing form of the oligosaccharyltransferase (OST) complex. OST exists in two different complex forms which contain common core subunits RPN1, RPN2, OST48, OST4, DAD1 and TMEM258, either STT3A or STT3B as catalytic subunits, and form-specific accessory subunits. OST can form stable complexes with the Sec61 complex or with both the Sec61 and TRAP complexes. The association of TUSC3 or MAGT1 with the STT3B-containing complex seems to be mutually exclusvice. In terms of tissue distribution, ubiquitous. Expressed at very low levels in brain, lung and kidney.

Its subcellular location is the cell membrane. It is found in the endoplasmic reticulum. The protein localises to the endoplasmic reticulum membrane. The protein operates within protein modification; protein glycosylation. Accessory component of the STT3B-containing form of the N-oligosaccharyl transferase (OST) complex which catalyzes the transfer of a high mannose oligosaccharide from a lipid-linked oligosaccharide donor to an asparagine residue within an Asn-X-Ser/Thr consensus motif in nascent polypeptide chains. Involved in N-glycosylation of STT3B-dependent substrates. Specifically required for the glycosylation of a subset of acceptor sites that are near cysteine residues; in this function seems to act redundantly with TUSC3. In its oxidized form proposed to form transient mixed disulfides with a glycoprotein substrate to facilitate access of STT3B to the unmodified acceptor site. Also has oxidoreductase-independent functions in the STT3B-containing OST complex possibly involving substrate recognition. Could indirectly play a role in Mg(2+) transport in epithelial cells. In Homo sapiens (Human), this protein is Dolichyl-diphosphooligosaccharide--protein glycosyltransferase subunit MAGT1.